Consider the following 1284-residue polypeptide: Peroxisomal ATPase PEX1 (1284 aa).

A disordered region spans residues 339–373 (SPKQQQDKSKQGVLLPDKEKQLSKSPDHKQISSNR). Over residues 343–373 (QQDKSKQGVLLPDKEKQLSKSPDHKQISSNR) the composition is skewed to basic and acidic residues. ATP contacts are provided by residues 600 to 607 (GGKGSGKS) and 882 to 889 (GPPGTGKT). 3 positions are modified to phosphoserine: Ser1182, Ser1210, and Ser1212. Residues 1261 to 1284 (FQNPKKRKNQSGTVFRTGQKVTLA) are disordered. Polar residues predominate over residues 1270 to 1284 (QSGTVFRTGQKVTLA).

The protein belongs to the AAA ATPase family. In terms of assembly, homooligomer; homooligomerizes in the cytosol, interaction with PEX6 promotes dissociation of the homooligomer. Interacts with PEX6; forming the PEX1-PEX6 AAA ATPase complex, which is composed of a heterohexamer formed by a trimer of PEX1-PEX6 dimers. Interacts indirectly with PEX26, via its interaction with PEX6.

It is found in the cytoplasm. It localises to the cytosol. The protein localises to the peroxisome membrane. It catalyses the reaction ATP + H2O = ADP + phosphate + H(+). Functionally, component of the PEX1-PEX6 AAA ATPase complex, a protein dislocase complex that mediates the ATP-dependent extraction of the PEX5 receptor from peroxisomal membranes, an essential step for PEX5 recycling. Specifically recognizes PEX5 monoubiquitinated at 'Cys-11', and pulls it out of the peroxisome lumen through the PEX2-PEX10-PEX12 retrotranslocation channel. Extraction by the PEX1-PEX6 AAA ATPase complex is accompanied by unfolding of the TPR repeats and release of bound cargo from PEX5. The polypeptide is Peroxisomal ATPase PEX1 (Mus musculus (Mouse)).